The sequence spans 1003 residues: Pumilio homolog 4 (1003 aa).

The tract at residues 38–65 (QHRNQQSFGRERERDIDVHRSGSAPPTV) is disordered. Residues 46 to 57 (GRERERDIDVHR) show a composition bias toward basic and acidic residues. Serine 225 carries the post-translational modification Phosphoserine. A compositionally biased stretch (polar residues) spans 285-300 (KNSPNTMLGSTMSSPV). The tract at residues 285–328 (KNSPNTMLGSTMSSPVPRNRTPDSHLVGRSTASGLPPIGTRVGP) is disordered. Residue threonine 305 is modified to Phosphothreonine. Residues 644–984 (AEASLLEGFK…HIVARVEKLI (341 aa)) enclose the PUM-HD domain. Pumilio repeat units follow at residues 664–699 (EIVG…AIFP), 700–735 (EILP…ELAE), 736–771 (QVTG…RMVK), 772–807 (ELDG…FIIS), 808–843 (SFYG…RIIM), 845–880 (EIMD…EIIN), 881–916 (KLAG…VLVN), and 917–958 (EMLG…LILS).

The protein resides in the cytoplasm. Functionally, sequence-specific RNA-binding protein that regulates translation and mRNA stability by binding the 3'-UTR of target mRNAs. Binds the APUM-binding elements (APBEs) in the 3'-UTR mRNA sequence of CLV1, PNH, WUS and FAS2. The sequence is that of Pumilio homolog 4 (APUM4) from Arabidopsis thaliana (Mouse-ear cress).